A 412-amino-acid polypeptide reads, in one-letter code: Proteasome-activating nucleotidase 2 (412 aa).

Residues 28-74 (LRQHFERMVDVNRELDQRLQNADDRHAELVDEVDQMKARNEALKTAS) are a coiled coil. ATP is bound by residues 196–201 (GTGKTM) and His-335. Residues 409 to 412 (DYQY) are docks into pockets in the proteasome alpha-ring to cause gate opening.

It belongs to the AAA ATPase family. In terms of assembly, homohexamer. The hexameric complex has a two-ring architecture resembling a top hat that caps the 20S proteasome core at one or both ends. Upon ATP-binding, the C-terminus of PAN interacts with the alpha-rings of the proteasome core by binding to the intersubunit pockets.

It is found in the cytoplasm. In terms of biological role, ATPase which is responsible for recognizing, binding, unfolding and translocation of substrate proteins into the archaeal 20S proteasome core particle. Is essential for opening the gate of the 20S proteasome via an interaction with its C-terminus, thereby allowing substrate entry and access to the site of proteolysis. Thus, the C-termini of the proteasomal ATPase function like a 'key in a lock' to induce gate opening and therefore regulate proteolysis. Unfolding activity requires energy from ATP hydrolysis, whereas ATP binding alone promotes ATPase-20S proteasome association which triggers gate opening, and supports translocation of unfolded substrates. The polypeptide is Proteasome-activating nucleotidase 2 (Haloferax volcanii (strain ATCC 29605 / DSM 3757 / JCM 8879 / NBRC 14742 / NCIMB 2012 / VKM B-1768 / DS2) (Halobacterium volcanii)).